The chain runs to 270 residues: tRNA pseudouridine synthase A (270 aa).

The active-site Nucleophile is the D60. The segment at 107–111 is RNA binding; it reads FHARF. Residue Y118 participates in substrate binding. An interaction with tRNA region spans residues 168–172; the sequence is QCQSR.

This sequence belongs to the tRNA pseudouridine synthase TruA family. Homodimer.

It catalyses the reaction uridine(38/39/40) in tRNA = pseudouridine(38/39/40) in tRNA. In terms of biological role, formation of pseudouridine at positions 38, 39 and 40 in the anticodon stem and loop of transfer RNAs. The chain is tRNA pseudouridine synthase A from Escherichia coli O139:H28 (strain E24377A / ETEC).